A 103-amino-acid chain; its full sequence is Nucleoid-associated protein CFF8240_0066 (103 aa).

This sequence belongs to the YbaB/EbfC family. In terms of assembly, homodimer.

It localises to the cytoplasm. Its subcellular location is the nucleoid. Its function is as follows. Binds to DNA and alters its conformation. May be involved in regulation of gene expression, nucleoid organization and DNA protection. The polypeptide is Nucleoid-associated protein CFF8240_0066 (Campylobacter fetus subsp. fetus (strain 82-40)).